We begin with the raw amino-acid sequence, 539 residues long: Phosphoenolpyruvate carboxykinase (ATP) (539 aa).

Substrate-binding residues include R64, Y206, and K212. ATP contacts are provided by residues K212, H231, and 247–255 (GLSGTGKTT). Mn(2+)-binding residues include K212 and H231. Position 268 (D268) interacts with Mn(2+). ATP is bound by residues E296, R332, 448 to 449 (RI), and T454. R332 serves as a coordination point for substrate.

This sequence belongs to the phosphoenolpyruvate carboxykinase (ATP) family. In terms of assembly, monomer. Mn(2+) serves as cofactor.

It is found in the cytoplasm. It catalyses the reaction oxaloacetate + ATP = phosphoenolpyruvate + ADP + CO2. It participates in carbohydrate biosynthesis; gluconeogenesis. Functionally, involved in the gluconeogenesis. Catalyzes the conversion of oxaloacetate (OAA) to phosphoenolpyruvate (PEP) through direct phosphoryl transfer between the nucleoside triphosphate and OAA. The sequence is that of Phosphoenolpyruvate carboxykinase (ATP) from Pectobacterium carotovorum subsp. carotovorum (strain PC1).